Here is a 421-residue protein sequence, read N- to C-terminus: Enolase (421 aa).

Position 165 (Gln-165) interacts with (2R)-2-phosphoglycerate. The active-site Proton donor is Glu-207. Mg(2+) is bound by residues Asp-244, Glu-285, and Asp-312. Residues Lys-337, Arg-366, Ser-367, and Lys-388 each coordinate (2R)-2-phosphoglycerate. The active-site Proton acceptor is Lys-337.

This sequence belongs to the enolase family. It depends on Mg(2+) as a cofactor.

The protein localises to the cytoplasm. It localises to the secreted. The protein resides in the cell surface. The enzyme catalyses (2R)-2-phosphoglycerate = phosphoenolpyruvate + H2O. It participates in carbohydrate degradation; glycolysis; pyruvate from D-glyceraldehyde 3-phosphate: step 4/5. Its function is as follows. Catalyzes the reversible conversion of 2-phosphoglycerate (2-PG) into phosphoenolpyruvate (PEP). It is essential for the degradation of carbohydrates via glycolysis. This is Enolase from Ehrlichia chaffeensis (strain ATCC CRL-10679 / Arkansas).